The sequence spans 392 residues: N-acyl-phosphatidylethanolamine-hydrolyzing phospholipase D (392 aa).

Residue methionine 1 is modified to N-acetylmethionine. Residues 1-16 are compositionally biased toward polar residues; the sequence is MDENETNQLLMTSNQY. A disordered region spans residues 1–39; it reads MDENETNQLLMTSNQYPKEAVRKRQNSRNSGGSDSSRFS. Residues 27–36 are compositionally biased toward low complexity; the sequence is SRNSGGSDSS. Positions 183 and 185 each coordinate Zn(2+). Tyrosine 186 provides a ligand contact to an N-acyl-1,2-diacyl-sn-glycero-3-phosphoethanolamine. Zn(2+)-binding residues include aspartate 187, histidine 188, and histidine 251. 2 residues coordinate deoxycholate: lysine 254 and methionine 258. Aspartate 282 lines the Zn(2+) pocket. Position 319 (histidine 319) interacts with an N-acyl-1,2-diacyl-sn-glycero-3-phosphoethanolamine. Histidine 341 lines the Zn(2+) pocket. Alanine 346 contributes to the deoxycholate binding site.

The protein belongs to the NAPE-PLD family. As to quaternary structure, homodimer. Bile acids promote the assembly of inactive monomers into an active dimer and enable catalysis. It depends on Zn(2+) as a cofactor. Widely expressed. Highest expression in brain, kidney and testis (at protein level). Expressed in adipose tissue (at protein level).

Its subcellular location is the golgi apparatus membrane. It localises to the early endosome membrane. The protein resides in the nucleus envelope. It is found in the nucleus. The protein localises to the nucleoplasm. The enzyme catalyses an N-acyl-1,2-diacyl-sn-glycero-3-phosphoethanolamine + H2O = an N-acylethanolamine + a 1,2-diacyl-sn-glycero-3-phosphate + H(+). It carries out the reaction N-butanoyl-1-hexadecanoyl-2-(9Z,12Z-octadecadienoyl)-sn-glycero-3-phosphoethanolamine + H2O = N-butanoyl ethanolamine + 1-hexadecanoyl-2-(9Z,12Z-octadecadienoyl)-sn-glycero-3-phosphate + H(+). The catalysed reaction is N-hexanoyl-1-hexadecanoyl-2-(9Z,12Z-octadecadienoyl)-sn-glycero-3-phosphoethanolamine + H2O = N-hexanoyl ethanolamine + 1-hexadecanoyl-2-(9Z,12Z-octadecadienoyl)-sn-glycero-3-phosphate + H(+). It catalyses the reaction N-octanoyl-1-hexadecanoyl-2-(9Z,12Z-octadecadienoyl)-sn-glycero-3-phosphoethanolamine + H2O = N-octanoyl ethanolamine + 1-hexadecanoyl-2-(9Z,12Z-octadecadienoyl)-sn-glycero-3-phosphate + H(+). The enzyme catalyses N-decanoyl-1-hexadecanoyl-2-(9Z,12Z-octadecadienoyl)-sn-glycero-3-phosphoethanolamine + H2O = N-decanoyl ethanolamine + 1-hexadecanoyl-2-(9Z,12Z-octadecadienoyl)-sn-glycero-3-phosphate + H(+). It carries out the reaction N-dodecanoyl-1,2-di-(9Z-octadecenoyl)-sn-glycero-3-phosphoethanolamine + H2O = N-dodecanoylethanolamine + 1,2-di-(9Z-octadecenoyl)-sn-glycero-3-phosphate + H(+). The catalysed reaction is N-tetradecanoyl-1,2-di-(9Z-octadecenoyl)-sn-glycero-3-phosphoethanolamine + H2O = N-tetradecanoylethanolamine + 1,2-di-(9Z-octadecenoyl)-sn-glycero-3-phosphate + H(+). It catalyses the reaction N-hexadecanoyl-1,2-di-(9Z-octadecenoyl)-sn-glycero-3-phosphoethanolamine + H2O = N-hexadecanoylethanolamine + 1,2-di-(9Z-octadecenoyl)-sn-glycero-3-phosphate + H(+). The enzyme catalyses N,1-dihexadecanoyl-2-(9Z,12Z-octadecadienoyl)-sn-glycero-3-phosphoethanolamine + H2O = 1-hexadecanoyl-2-(9Z,12Z-octadecadienoyl)-sn-glycero-3-phosphate + N-hexadecanoylethanolamine + H(+). It carries out the reaction N-octadecanoyl-1,2-di-(9Z-octadecenoyl)-sn-glycero-3-phosphoethanolamine + H2O = N-octadecanoyl ethanolamine + 1,2-di-(9Z-octadecenoyl)-sn-glycero-3-phosphate + H(+). The catalysed reaction is N,1,2-tri-(9Z-octadecenoyl)-sn-glycero-3-phosphoethanolamine + H2O = N-(9Z-octadecenoyl) ethanolamine + 1,2-di-(9Z-octadecenoyl)-sn-glycero-3-phosphate + H(+). It catalyses the reaction N-(5Z,8Z,11Z,14Z-eicosatetraenoyl)-1,2-diacyl-sn-glycero-3-phosphoethanolamine + H2O = N-(5Z,8Z,11Z,14Z-eicosatetraenoyl)-ethanolamine + a 1,2-diacyl-sn-glycero-3-phosphate + H(+). The enzyme catalyses N-(5Z,8Z,11Z,14Z-eicosatetraenoyl)-1,2-di-(9Z-octadecenoyl)-sn-glycero-3-phosphoethanolamine + H2O = N-(5Z,8Z,11Z,14Z-eicosatetraenoyl)-ethanolamine + 1,2-di-(9Z-octadecenoyl)-sn-glycero-3-phosphate + H(+). It carries out the reaction 1-O-(1Z-octadecenoyl)-2-(9Z-octadecenoyl)-sn-glycero-3-phospho-N-hexadecanoyl-ethanolamine + H2O = 1-O-(1Z-octadecenoyl)-2-(9Z-octadecenoyl)-sn-glycero-3-phosphate + N-hexadecanoylethanolamine + H(+). The catalysed reaction is N,1-diacyl-sn-glycero-3-phosphoethanolamine + H2O = an N-acylethanolamine + a 1-acyl-sn-glycero-3-phosphate + H(+). It catalyses the reaction N,1-dihexadecanoyl-sn-glycero-3-phosphoethanolamine + H2O = N-hexadecanoylethanolamine + 1-hexadecanoyl-sn-glycero-3-phosphate + H(+). The enzyme catalyses N-(5Z,8Z,11Z,14Z-eicosatetraenoyl)-1-(9Z-octadecenoyl)-sn-glycero-3-phosphoethanolamine + H2O = N-(5Z,8Z,11Z,14Z-eicosatetraenoyl)-ethanolamine + 1-(9Z-octadecenoyl)-sn-glycero-3-phosphate + H(+). With respect to regulation, activated by divalent cations. Activated by bile acids. Its function is as follows. D-type phospholipase that hydrolyzes N-acyl-phosphatidylethanolamines (NAPEs) to produce bioactive N-acylethanolamines/fatty acid ethanolamides (NAEs/FAEs) and phosphatidic acid. Cleaves the terminal phosphodiester bond of diacyl- and alkenylacyl-NAPEs, primarily playing a role in the generation of long-chain saturated and monounsaturated NAEs in the brain. May control NAPE homeostasis in dopaminergic neuron membranes and regulate neuron survival, partly through RAC1 activation. As a regulator of lipid metabolism in the adipose tissue, mediates the crosstalk between adipocytes, gut microbiota and immune cells to control body temperature and weight. In particular, regulates energy homeostasis by promoting cold-induced brown or beige adipocyte differentiation program to generate heat from fatty acids and glucose. Has limited D-type phospholipase activity toward N-acyl lyso-NAPEs. The protein is N-acyl-phosphatidylethanolamine-hydrolyzing phospholipase D (NAPEPLD) of Bos taurus (Bovine).